Reading from the N-terminus, the 615-residue chain is Leucine aminopeptidase 2-1 (615 aa).

Substrate contacts are provided by residues 137–139 (QCQ) and 261–266 (PYGGME). Residue His290 participates in Zn(2+) binding. Residue Glu291 is the Proton acceptor of the active site. 2 residues coordinate Zn(2+): His294 and Glu313. Tyr380 (proton donor) is an active-site residue.

This sequence belongs to the peptidase M1 family. It depends on Zn(2+) as a cofactor.

Its subcellular location is the cytoplasm. The protein localises to the nucleus. It carries out the reaction an epoxide + H2O = an ethanediol. Aminopeptidase that preferentially cleaves di- and tripeptides. Also has low epoxide hydrolase activity (in vitro). Can hydrolyze the epoxide leukotriene LTA(4) but it forms preferentially 5,6-dihydroxy-7,9,11,14-eicosatetraenoic acid rather than the cytokine leukotriene B(4) as the product compared to the homologous mammalian enzyme (in vitro). The protein is Leucine aminopeptidase 2-1 of Meyerozyma guilliermondii (strain ATCC 6260 / CBS 566 / DSM 6381 / JCM 1539 / NBRC 10279 / NRRL Y-324) (Yeast).